The sequence spans 132 residues: Replication enhancer protein (132 aa).

Belongs to the geminiviridae replication enhancer protein family. Homooligomer. Interacts with the replication-associated protein (REP). Interacts with host proliferating cell nuclear antigen (PCNA). Interacts with host retinoblastoma-related protein 1 (RBR1), and may thereby deregulate the host cell cycle. Oligomerization and interaction with PCNA are necessary for optimal replication enhancement.

In terms of biological role, increases viral DNA accumulation. Enhances infectivity and symptom expression. The polypeptide is Replication enhancer protein (Macroptilium lathyroides (Lima bean)).